We begin with the raw amino-acid sequence, 373 residues long: MKILADQNMPLVEQYFADIGEVERFDGRQLTADQLIDVDVLLTRSVTQVNNELLAHANKLSFVGTATIGVDHIDTQLLNDKNIAFSSAPGCNAIAVAEYVISSLYALSQENARPLNNQTIGIVGVGSIGSCLAQKLQALNLTVLLCDPIKHAQGLLNEHVALDQLLAQSDIVTFHVPLIKSGEHKTLHMMDKARLKALKPGLTLINASRGDVIDNQALLEVMQAGADLDLVLDVWENEPTILIELLEHVRYASVHIAGHTLEGKARGTQILYQKFCELKGIEATKSLDEFLPVPAITQATLGQSFNEADIARLVHLIYDVRRDDGILLRDLANNGFDSLRKNYPVRREFSTLTIQGDSSQLAALAQLGFTVAN.

2 residues coordinate substrate: Ser-45 and Thr-67. NAD(+)-binding positions include Asp-147, 207–209 (ASR), and Asp-233. Residue Arg-209 is part of the active site. Residue Glu-238 is part of the active site. The active-site Proton donor is His-255. NAD(+) is bound at residue Gly-258.

The protein belongs to the D-isomer specific 2-hydroxyacid dehydrogenase family. PdxB subfamily. Homodimer.

The protein resides in the cytoplasm. The enzyme catalyses 4-phospho-D-erythronate + NAD(+) = (R)-3-hydroxy-2-oxo-4-phosphooxybutanoate + NADH + H(+). It participates in cofactor biosynthesis; pyridoxine 5'-phosphate biosynthesis; pyridoxine 5'-phosphate from D-erythrose 4-phosphate: step 2/5. Functionally, catalyzes the oxidation of erythronate-4-phosphate to 3-hydroxy-2-oxo-4-phosphonooxybutanoate. The polypeptide is Erythronate-4-phosphate dehydrogenase (Pseudoalteromonas translucida (strain TAC 125)).